The primary structure comprises 357 residues: Membrane-bound lytic murein transglycosylase C (357 aa).

The N-terminal stretch at 1–16 is a signal peptide; sequence MKKLLALFVIAPILIS. C17 carries the N-palmitoyl cysteine lipid modification. Residue C17 is the site of S-diacylglycerol cysteine attachment.

This sequence belongs to the transglycosylase Slt family.

It is found in the cell outer membrane. The enzyme catalyses Exolytic cleavage of the (1-&gt;4)-beta-glycosidic linkage between N-acetylmuramic acid (MurNAc) and N-acetylglucosamine (GlcNAc) residues in peptidoglycan, from either the reducing or the non-reducing ends of the peptidoglycan chains, with concomitant formation of a 1,6-anhydrobond in the MurNAc residue.. Functionally, murein-degrading enzyme. May play a role in recycling of muropeptides during cell elongation and/or cell division. The sequence is that of Membrane-bound lytic murein transglycosylase C from Photorhabdus laumondii subsp. laumondii (strain DSM 15139 / CIP 105565 / TT01) (Photorhabdus luminescens subsp. laumondii).